The chain runs to 300 residues: MTCASNSNSFLNKAIEFPSPAKINLFLHIVGQREDGYHNLETLFQFIDHSDTLTLTATETPDIELLTPIDGVNNDDNLIVKAARLLKNRSNTDLGVKISINKILPMGGGLGGGSSNAATVLVALNLLWQCEFSLSELSSLGLSLGADVPIFIHGFSAFAQGVGDHLTAIKPQESWYLITKPECSISTKEIFTAVDLPRNTKKLDPTALNTSDFVTESFHNDCQTLVIKQYPEVAKLLAWLVEYAPSRMTGTGACVFTQFSSYQEARSLQAKLPKGISSFVAQGLNKSPLCSVIAKLSLSE.

Residue K22 is part of the active site. 105–115 contributes to the ATP binding site; sequence PMGGGLGGGSS. D147 is a catalytic residue.

Belongs to the GHMP kinase family. IspE subfamily.

It catalyses the reaction 4-CDP-2-C-methyl-D-erythritol + ATP = 4-CDP-2-C-methyl-D-erythritol 2-phosphate + ADP + H(+). It participates in isoprenoid biosynthesis; isopentenyl diphosphate biosynthesis via DXP pathway; isopentenyl diphosphate from 1-deoxy-D-xylulose 5-phosphate: step 3/6. In terms of biological role, catalyzes the phosphorylation of the position 2 hydroxy group of 4-diphosphocytidyl-2C-methyl-D-erythritol. This chain is 4-diphosphocytidyl-2-C-methyl-D-erythritol kinase, found in Colwellia psychrerythraea (strain 34H / ATCC BAA-681) (Vibrio psychroerythus).